Reading from the N-terminus, the 513-residue chain is E3 ubiquitin-protein ligase RNF25 (513 aa).

The 109-residue stretch at 9-117 folds into the RWD domain; the sequence is SEIEVLQSIY…ERAKEILTDS (109 aa). Zn(2+) is bound by residues Cys-124, Cys-127, Cys-142, His-144, His-147, Cys-150, Cys-187, and Cys-190. The segment at 124–191 adopts an RING-type; atypical zinc-finger fold; that stretch reads CVICLYDFKE…ELAVVCPVCR (68 aa). The tract at residues 261-513 is disordered; the sequence is NLSDTPGMTD…EKEFRKEGVL (253 aa). Low complexity predominate over residues 271-297; the sequence is SSGAESSQSLPSSSPDSTSTTQTSQNQ. 2 stretches are compositionally biased toward polar residues: residues 345–397 and 406–423; these read SDKI…QDML and EVSQQKECISKEVTQTIL. The span at 426-440 shows a compositional bias: basic and acidic residues; the sequence is GHPEREHVGRGDKRG. The span at 482–498 shows a compositional bias: gly residues; that stretch reads AGRGHRGGGAYRGGGRG. Positions 501–513 are enriched in basic and acidic residues; the sequence is QRVEKEFRKEGVL.

Belongs to the RNF25 family.

The protein resides in the cytoplasm. The catalysed reaction is S-ubiquitinyl-[E2 ubiquitin-conjugating enzyme]-L-cysteine + [acceptor protein]-L-lysine = [E2 ubiquitin-conjugating enzyme]-L-cysteine + N(6)-ubiquitinyl-[acceptor protein]-L-lysine.. It participates in protein modification; protein ubiquitination. E3 ubiquitin-protein ligase that plays a key role in the RNF14-RNF25 translation quality control pathway, a pathway that takes place when a ribosome has stalled during translation, and which promotes ubiquitination and degradation of translation factors on stalled ribosomes. May also acts as a positive regulator of the Wnt signaling. The chain is E3 ubiquitin-protein ligase RNF25 from Danio rerio (Zebrafish).